The primary structure comprises 156 residues: Small ribosomal subunit protein uS7 (156 aa).

This sequence belongs to the universal ribosomal protein uS7 family. As to quaternary structure, part of the 30S ribosomal subunit. Contacts proteins S9 and S11.

Functionally, one of the primary rRNA binding proteins, it binds directly to 16S rRNA where it nucleates assembly of the head domain of the 30S subunit. Is located at the subunit interface close to the decoding center, probably blocks exit of the E-site tRNA. The sequence is that of Small ribosomal subunit protein uS7 from Maridesulfovibrio salexigens (strain ATCC 14822 / DSM 2638 / NCIMB 8403 / VKM B-1763) (Desulfovibrio salexigens).